Reading from the N-terminus, the 832-residue chain is Adhesin AWP2 (832 aa).

The first 25 residues, 1 to 25, serve as a signal peptide directing secretion; sequence MRKLPLFMAWKFWLICLYIIKVAST. 16 N-linked (GlcNAc...) asparagine glycosylation sites follow: Asn187, Asn290, Asn372, Asn390, Asn435, Asn448, Asn472, Asn482, Asn507, Asn512, Asn515, Asn534, Asn562, Asn579, Asn695, and Asn721. The tract at residues 722-747 is disordered; it reads QTTSPSMHTTSLVGSENGVSAKTVND.

It localises to the secreted. It is found in the cell wall. In terms of biological role, mediates cell-substrate adhesion and promotes biofilm formation. The chain is Adhesin AWP2 from Candida glabrata (strain ATCC 2001 / BCRC 20586 / JCM 3761 / NBRC 0622 / NRRL Y-65 / CBS 138) (Yeast).